The primary structure comprises 827 residues: Glycerol-3-phosphate acyltransferase 1, mitochondrial (827 aa).

Residues 1–87 (MEESSVTVGT…FFNPSIPSLG (87 aa)) are Cytoplasmic-facing. An important for mitochondrial localization region spans residues 80 to 120 (NPSIPSLGLRNVIYINETHTRHRGWLARRLSYILFVQERDV). The stretch at 88 to 118 (LRNVIYINETHTRHRGWLARRLSYILFVQER) is an intramembrane region. Over 119 to 827 (DVHKGMFATS…LEYILSFVVL (709 aa)) the chain is Cytoplasmic. The short motif at 230–235 (HRSHID) is the HXXXXD motif element. 5 residues coordinate CoA: arginine 278, arginine 279, lysine 288, arginine 293, and arginine 328. Serine 380 is subject to Phosphoserine. Arginine 462 is a binding site for CoA. Serine 687 and serine 694 each carry phosphoserine. Lysine 779 and lysine 783 each carry N6-acetyllysine.

The protein belongs to the GPAT/DAPAT family. Highest levels in liver, intermediate levels in muscle and kidney, and lowest levels in lung and brain.

It localises to the mitochondrion outer membrane. It carries out the reaction sn-glycerol 3-phosphate + an acyl-CoA = a 1-acyl-sn-glycero-3-phosphate + CoA. It catalyses the reaction (9Z,12Z)-octadecadienoyl-CoA + sn-glycerol 3-phosphate = 1-(9Z,12Z)-octadecadienoyl-sn-glycero-3-phosphate + CoA. The enzyme catalyses sn-glycerol 3-phosphate + (9Z)-octadecenoyl-CoA = 1-(9Z-octadecenoyl)-sn-glycero-3-phosphate + CoA. The catalysed reaction is sn-glycerol 3-phosphate + octadecanoyl-CoA = 1-octadecanoyl-sn-glycero-3-phosphate + CoA. It carries out the reaction sn-glycerol 3-phosphate + hexadecanoyl-CoA = 1-hexadecanoyl-sn-glycero-3-phosphate + CoA. It catalyses the reaction dodecanoyl-CoA + sn-glycerol 3-phosphate = 1-dodecanoyl-sn-glycerol 3-phosphate + CoA. The enzyme catalyses 1-acyl-sn-glycero-3-phospho-(1'-sn-glycerol) + an acyl-CoA = a 1,2-diacyl-sn-glycero-3-phospho-(1'-sn-glycerol) + CoA. Its pathway is phospholipid metabolism; CDP-diacylglycerol biosynthesis; CDP-diacylglycerol from sn-glycerol 3-phosphate: step 1/3. Its function is as follows. Mitochondrial membrane protein that catalyzes the essential first step of biosynthesis of glycerolipids such as triglycerides, phosphatidic acids and lysophosphatidic acids. Esterifies acyl-group from acyl-coenzyme A (acyl-CoA) to the sn-1 position of glycerol-3-phosphate, to produce lysophosphatidic acid. Has a narrow hydrophobic binding cleft that selects for a linear acyl chain. Catalytic activity is higher for substrates with a 16-carbon acyl chain. The chain is Glycerol-3-phosphate acyltransferase 1, mitochondrial from Mus musculus (Mouse).